A 270-amino-acid polypeptide reads, in one-letter code: Cytochrome c oxidase subunit 3 (270 aa).

The next 7 membrane-spanning stretches (helical) occupy residues 21-41 (PWPF…VLYF), 46-66 (GSLV…FVWW), 90-110 (GIML…WAFF), 131-151 (FFSP…SGCA), 167-187 (AIFS…FQIY), 205-225 (FFMI…FLFV), and 248-268 (WYWH…YWWG).

This sequence belongs to the cytochrome c oxidase subunit 3 family. As to quaternary structure, component of the cytochrome c oxidase (complex IV, CIV), a multisubunit enzyme composed of a catalytic core of 3 subunits and several supernumerary subunits. The complex exists as a monomer or a dimer and forms supercomplexes (SCs) in the inner mitochondrial membrane with ubiquinol-cytochrome c oxidoreductase (cytochrome b-c1 complex, complex III, CIII).

It is found in the mitochondrion inner membrane. It catalyses the reaction 4 Fe(II)-[cytochrome c] + O2 + 8 H(+)(in) = 4 Fe(III)-[cytochrome c] + 2 H2O + 4 H(+)(out). In terms of biological role, component of the cytochrome c oxidase, the last enzyme in the mitochondrial electron transport chain which drives oxidative phosphorylation. The respiratory chain contains 3 multisubunit complexes succinate dehydrogenase (complex II, CII), ubiquinol-cytochrome c oxidoreductase (cytochrome b-c1 complex, complex III, CIII) and cytochrome c oxidase (complex IV, CIV), that cooperate to transfer electrons derived from NADH and succinate to molecular oxygen, creating an electrochemical gradient over the inner membrane that drives transmembrane transport and the ATP synthase. Cytochrome c oxidase is the component of the respiratory chain that catalyzes the reduction of oxygen to water. Electrons originating from reduced cytochrome c in the intermembrane space (IMS) are transferred via the dinuclear copper A center (CU(A)) of subunit 2 and heme A of subunit 1 to the active site in subunit 1, a binuclear center (BNC) formed by heme A3 and copper B (CU(B)). The BNC reduces molecular oxygen to 2 water molecules using 4 electrons from cytochrome c in the IMS and 4 protons from the mitochondrial matrix. In Cyanidium caldarium (Red alga), this protein is Cytochrome c oxidase subunit 3 (COX3).